Here is a 123-residue protein sequence, read N- to C-terminus: uncharacterized protein (123 aa).

The interval 35–100 (SQDHGDDPAE…SSGAPASQHC (66 aa)) is disordered. Residues 37–48 (DHGDDPAERGRT) show a composition bias toward basic and acidic residues. Low complexity predominate over residues 85–97 (ALPASPSSGAPAS).

This is an uncharacterized protein from Homo sapiens (Human).